A 777-amino-acid chain; its full sequence is MANSLILGSPINPEGEMMIQFSNNHDNNIEFQRRKKMKKNNPETETDSSSDLSCFVAQTGALLHLPQGFTSSNGSNRECRKSPRPIISSYSSSEKQFVTFTLAPVDGRHCRLRLPMQFTRENGINKPGKIYLVGKDGSKWLANLLLENNRGRMTLGDGWKSFVKANGLKTGDTYTFKLLWEDTTPVLSLCFEEYNTDTRVGEESSKESLPAEPSSQEKIVKDDNNKDESSTWKREGNHLRCKDSTSPSQNCTLTVTITPDSLEHGRLRLPLQFMTENSMNKPGEITLLGTDGAKWMASLLLEKKGRMSLGKGWKDFAKANGLKTGDSITLEPIWEDRTPVLSIKSSSGKGQSEFSKESLSIKPSSGNMTKKVENNREASRKYPPRSRESSSAIQNQFMALTPLRDIVSQVAHDLSIGEVINFRHKGDNMLRVSDLGSNCCGVQDLLAPSSNYDHDNISNISMKINPHIRKEAVTFSSYDGYAHDNFEPPSKKKVKKNNPEMEADYLSDHSCFVSHVTTSSLHTNALSLEVKESLPIEPSIKPNISEDDNNKEEDIIEENSSFEREKNHWICIDSISSSQNRFLTLTITPDSLKHGRLRLPLQFMIENSMNKPGEITVLGKDGAKWLVSLLLERRGRMSLDASSGQETREAEKNREESSSLWELEKRTYCPRKRDSSSDVKNRFLTLTLAPEDVKDGNLHLPCQFMRINGINKPGQITLLGRGGMKWFAYLLSGDGTVVVGNGWKGFCEANGVMLGETFVLEFIPKDDTNHVFKFYTK.

Positions F97–E193 form a DNA-binding region, TF-B3 1. Disordered regions lie at residues V200–S248 and K344–S391. Positions K218 to D243 are enriched in basic and acidic residues. A DNA-binding region (TF-B3 2) is located at residues T252–S347. Residues K344–M368 are compositionally biased toward polar residues. The segment covering K370–E388 has biased composition (basic and acidic residues). 2 DNA-binding regions (TF-B3) span residues F582–S676 and F683–K777.

It localises to the nucleus. This chain is B3 domain-containing protein REM-like 1, found in Arabidopsis thaliana (Mouse-ear cress).